A 1063-amino-acid chain; its full sequence is Structural polyprotein (1063 aa).

Residues 23–131 are disordered; that stretch reads LRAELAAGAS…LGPPTNPFQA (109 aa). Residues 30-69 form a human C1QBP/SF2P32-binding region; sequence GASQLRRPRPPRQRDSSTSGDDSGRDSGGPRRRRGNRGRG. Ser-46 is modified (phosphoserine; by host). Basic residues predominate over residues 59–69; sequence PRRRRGNRGRG. Basic and acidic residues predominate over residues 70-87; sequence QRKDWSKAPPPPEERQES. The span at 93 to 107 shows a compositional bias: pro residues; the sequence is APKPPRAPPQPPQPP. Cys-153 and Cys-197 are oxidised to a cystine. Positions 279–300 are functions as E2 signal peptide; it reads GAPQVFLAGLLLAAVAVGTARA. At 301–534 the chain is on the extracellular side; sequence GLQPRTDIAA…LWLATANALS (234 aa). The interval 305–327 is disordered; the sequence is RTDIAAPPAPPQAPRAHGKHYGH. Asn-353, Asn-371, Asn-410, and Asn-429 each carry an N-linked (GlcNAc...) asparagine; by host glycan. A helical transmembrane segment spans residues 535–555; that stretch reads LDHALAAVVLLVPWVLIFMLC. The Cytoplasmic segment spans residues 556–582; that stretch reads RRACRRRGAAAALTAVVLQGYNPPAYG. Residues 563 to 582 form a functions as E1 signal peptide region; the sequence is GAAAALTAVVLQGYNPPAYG. Over 583–1028 the chain is Extracellular; sequence EEAFTYLCTA…QTWAEWAAAH (446 aa). 8 disulfide bridges follow: Cys-590-Cys-595, Cys-619-Cys-824, Cys-641-Cys-653, Cys-699-Cys-712, Cys-758-Cys-767, Cys-807-Cys-817, Cys-931-Cys-934, and Cys-950-Cys-983. The N-linked (GlcNAc...) asparagine; by host glycan is linked to Asn-658. Positions 670 and 671 each coordinate Ca(2+). Ca(2+) is bound by residues Asp-718 and Thr-719. Asn-759 and Asn-791 each carry an N-linked (GlcNAc...) asparagine; by host glycan. Thr-1011 and Thr-1012 each carry an O-linked (GalNAc...) threonine; by host glycan. The chain crosses the membrane as a helical span at residues 1029–1049; it reads WWQLTLGAICALLLAGLLACC. Residues 1050-1063 lie on the Extracellular side of the membrane; the sequence is AKCLYYLRGAIAPR.

Homodimer; further assembles into homooligomer. Interacts with human C1QBP. Interacts (via N-terminus) with protease/methyltransferase p150. As to quaternary structure, heterodimer with spike glycoprotein E2. In terms of assembly, heterodimer with spike glycoprotein E1. Structural polyprotein: Specific enzymatic cleavages in vivo yield mature proteins. Two signal peptidase-mediated cleavages within the polyprotein produce the structural proteins capsid, E2, and E1. The E2 signal peptide remains attached to the C-terminus of the capsid protein after cleavage by the signal peptidase. Another signal peptide at E2 C-terminus directs E1 to the ER, with a similar mechanism. In terms of processing, contains three N-linked oligosaccharides. Post-translationally, capsid is phosphorylated on Ser-46 by host. This phosphorylation negatively regulates capsid protein RNA-binding activity. Dephosphorylated by human PP1A.

It is found in the virion. It localises to the host cytoplasm. The protein resides in the host mitochondrion. Its subcellular location is the virion membrane. The protein localises to the host Golgi apparatus membrane. In terms of biological role, capsid protein interacts with genomic RNA and assembles into icosahedric core particles 65-70 nm in diameter. The resulting nucleocapsid eventually associates with the cytoplasmic domain of E2 at the cell membrane, leading to budding and formation of mature virions from host Golgi membranes. Phosphorylation negatively regulates RNA-binding activity, possibly delaying virion assembly during the viral replication phase. Capsid protein dimerizes and becomes disulfide-linked in the virion. Modulates genomic RNA replication. Modulates subgenomic RNA synthesis by interacting with human C1QBP/SF2P32. Induces both perinuclear clustering of mitochondria and the formation of electron-dense intermitochondrial plaques, both hallmarks of rubella virus infected cells. Induces apoptosis when expressed in transfected cells. Its function is as follows. Responsible for viral attachment to target host cell, by binding to the cell receptor. Its transport to the plasma membrane depends on interaction with E1 protein. The surface glycoproteins display an irregular helical organization and a pseudo-tetrameric inner nucleocapsid arrangement. Class II viral fusion protein. Fusion activity is inactive as long as E1 is bound to E2 in mature virion. After virus attachment to target cell and clathrin-mediated endocytosis, acidification of the endosome would induce dissociation of E1/E2 heterodimer and concomitant trimerization of the E1 subunits. This E1 homotrimer is fusion active, and promotes release of viral nucleocapsid in cytoplasm after endosome and viral membrane fusion. The cytoplasmic tail of spike glycoprotein E1 modulates virus release. The surface glycoproteins display an irregular helical organization and a pseudo-tetrameric inner nucleocapsid arrangement. The protein is Structural polyprotein of Rubella virus (strain BRD1) (RUBV).